We begin with the raw amino-acid sequence, 82 residues long: Small ribosomal subunit protein bS16 (82 aa).

This sequence belongs to the bacterial ribosomal protein bS16 family.

The chain is Small ribosomal subunit protein bS16 from Gloeothece citriformis (strain PCC 7424) (Cyanothece sp. (strain PCC 7424)).